The following is a 345-amino-acid chain: Phosphoribosylformylglycinamidine cyclo-ligase (345 aa).

The protein belongs to the AIR synthase family.

The protein resides in the cytoplasm. It catalyses the reaction 2-formamido-N(1)-(5-O-phospho-beta-D-ribosyl)acetamidine + ATP = 5-amino-1-(5-phospho-beta-D-ribosyl)imidazole + ADP + phosphate + H(+). It functions in the pathway purine metabolism; IMP biosynthesis via de novo pathway; 5-amino-1-(5-phospho-D-ribosyl)imidazole from N(2)-formyl-N(1)-(5-phospho-D-ribosyl)glycinamide: step 2/2. The chain is Phosphoribosylformylglycinamidine cyclo-ligase from Staphylococcus carnosus (strain TM300).